A 302-amino-acid polypeptide reads, in one-letter code: L-threonate dehydrogenase (302 aa).

Residues 7–35 (FHVG…TWGA) and T102 each bind NAD(+). K178 is a catalytic residue. K246 contacts NAD(+).

The protein belongs to the HIBADH-related family. L-threonate dehydrogenase subfamily.

The catalysed reaction is L-threonate + NAD(+) = 2-dehydro-L-erythronate + NADH + H(+). Its function is as follows. Catalyzes oxidation of L-threonate to 2-oxo-tetronate. Can use either NAD(+) or NADP(+) as cosubstrate, with a preference for NAD(+). The chain is L-threonate dehydrogenase from Escherichia coli (strain K12).